The following is a 68-amino-acid chain: Small integral membrane protein 10-like protein 3 (68 aa).

This chain is Small integral membrane protein 10-like protein 3, found in Homo sapiens (Human).